Consider the following 322-residue polypeptide: Cysteine protease YopT (322 aa).

Catalysis depends on residues Cys-139, His-258, and Asp-274.

This sequence belongs to the peptidase C58 family. Interacts with human ARHA.

The protein resides in the secreted. Functionally, cysteine protease, which is translocated into infected cells and plays a central role in pathogenesis by cleaving the C-terminus end of the human small GTPase RhoA/ARHA, a regulator of cytoskeleton. Once cleaved, ARHA loses its lipid modification, and is released from the cell membrane, leading to the subsequent disruption of actin cytoskeleton of the host cell. The polypeptide is Cysteine protease YopT (yopT) (Yersinia pseudotuberculosis serotype I (strain IP32953)).